The chain runs to 66 residues: Large ribosomal subunit protein uL29 (66 aa).

Belongs to the universal ribosomal protein uL29 family.

The protein is Large ribosomal subunit protein uL29 of Borrelia duttonii (strain Ly).